Reading from the N-terminus, the 330-residue chain is Tetraacyldisaccharide 4'-kinase (330 aa).

58 to 65 (TVGGSGKT) lines the ATP pocket.

It belongs to the LpxK family.

The enzyme catalyses a lipid A disaccharide + ATP = a lipid IVA + ADP + H(+). The protein operates within glycolipid biosynthesis; lipid IV(A) biosynthesis; lipid IV(A) from (3R)-3-hydroxytetradecanoyl-[acyl-carrier-protein] and UDP-N-acetyl-alpha-D-glucosamine: step 6/6. Its function is as follows. Transfers the gamma-phosphate of ATP to the 4'-position of a tetraacyldisaccharide 1-phosphate intermediate (termed DS-1-P) to form tetraacyldisaccharide 1,4'-bis-phosphate (lipid IVA). In Shewanella halifaxensis (strain HAW-EB4), this protein is Tetraacyldisaccharide 4'-kinase.